A 563-amino-acid chain; its full sequence is Arginine--tRNA ligase (563 aa).

The short motif at 121 to 131 is the 'HIGH' region element; sequence PNIAKPFSIGH.

Belongs to the class-I aminoacyl-tRNA synthetase family. Monomer.

The protein resides in the cytoplasm. The enzyme catalyses tRNA(Arg) + L-arginine + ATP = L-arginyl-tRNA(Arg) + AMP + diphosphate. This chain is Arginine--tRNA ligase, found in Streptococcus pyogenes serotype M2 (strain MGAS10270).